Consider the following 175-residue polypeptide: MATGPRYFVPFRRRHEGKTDYYKRMSLLSSGTPRMVVRKTNRQIIVQLVVPEVEGDSTLVAAYSAELAGYGYEGSTASTPAAYLTGMLFAVKALNAGYGEAILDIGLARAKPGARVFAALKGAVDAGLDVPYGESILPDEERLKGAHIAEYAPERAGDLVTNVEAVALAIKKELV.

It belongs to the universal ribosomal protein uL18 family. In terms of assembly, part of the 50S ribosomal subunit. Contacts the 5S and 23S rRNAs.

Functionally, this is one of the proteins that bind and probably mediate the attachment of the 5S RNA into the large ribosomal subunit, where it forms part of the central protuberance. This is Large ribosomal subunit protein uL18 from Methanoculleus marisnigri (strain ATCC 35101 / DSM 1498 / JR1).